A 509-amino-acid polypeptide reads, in one-letter code: MSEQNPTQAAKQAPQQELNDIMAQRLAKLDAMREKGQAFPNDFRRENISDDLHARYDDKTKEELEELAVEVSIAGRMMMRRIMGKASFATIQDMGGRIQLYVTRDKLPESFYNTEFKKWDLGDIIGAKGVLFKTQTNELSIKVSEIRILTKALRPLPDKFHGLSDTEACYRQRYLDLIANDNSRKTFLLRNKIVNAIRQYLNDRDFMEVETPMLQSIPGGAAAKPFETYHNALSLPMYLRIAPELNLKRLVVGGFERVFEINRSFRNEGVSTRHNPEFTMIEFYQAYADYIDLMNLTEEMLRSIAENVLGSSIVNYGDQVFDFGAAFIRMTMKESVLQYNEGIEASELESMASLKALAARFNVNIKENWGEGKVLTEIFEETTEHKLLQPTFITAYPAEVSPLARRNDQDPSVTDRFEFFVGGRELANGFSELNDSQDQAERFMDQVAQKESGDDEAMFYDADYITALEHGLPPTAGEGIGIDRLVMLFTDSHTIRDVLLFPHMRPQAK.

The span at 1–18 (MSEQNPTQAAKQAPQQEL) shows a compositional bias: polar residues. Residues 1–20 (MSEQNPTQAAKQAPQQELND) are disordered. Positions 418 and 425 each coordinate Mg(2+).

This sequence belongs to the class-II aminoacyl-tRNA synthetase family. Homodimer. Mg(2+) is required as a cofactor.

It is found in the cytoplasm. The catalysed reaction is tRNA(Lys) + L-lysine + ATP = L-lysyl-tRNA(Lys) + AMP + diphosphate. The sequence is that of Lysine--tRNA ligase from Psychromonas ingrahamii (strain DSM 17664 / CCUG 51855 / 37).